A 124-amino-acid chain; its full sequence is Fluoride-specific ion channel FluC (124 aa).

The next 4 helical transmembrane spans lie at 4-24, 35-55, 60-80, and 102-122; these read LLLV…ISIF, FGTL…YALG, ISPE…TTFS, and VVLN…LVFS. Glycine 74 and threonine 77 together coordinate Na(+).

The protein belongs to the fluoride channel Fluc/FEX (TC 1.A.43) family.

The protein resides in the cell inner membrane. It catalyses the reaction fluoride(in) = fluoride(out). With respect to regulation, na(+) is not transported, but it plays an essential structural role and its presence is essential for fluoride channel function. Its function is as follows. Fluoride-specific ion channel. Important for reducing fluoride concentration in the cell, thus reducing its toxicity. The protein is Fluoride-specific ion channel FluC of Shewanella baltica (strain OS223).